The sequence spans 486 residues: NADH dehydrogenase [ubiquinone] flavoprotein 1, mitochondrial (486 aa).

Residues 1–30 (MAPVRGILGLQRAVSIWKESNRLTPALRSF) constitute a mitochondrion transit peptide. A compositionally biased stretch (low complexity) spans 31–40 (STQAASTSTT). The segment at 31 to 57 (STQAASTSTTPQPPPPPPPPEKTHFGG) is disordered. Residues 41–50 (PQPPPPPPPP) show a composition bias toward pro residues. 110 to 119 (GRGGAGFPSG) contributes to the NADH binding site. An FMN-binding site is contributed by 222-270 (FGAGAYICGEETALLESLEGKQGKPRLKPPFPANAGLYGCPTTVTNVET). Residues cysteine 402, cysteine 405, cysteine 408, and cysteine 448 each coordinate [4Fe-4S] cluster.

This sequence belongs to the complex I 51 kDa subunit family. Complex I is composed of at least 49 different subunits. This is a component of the flavoprotein-sulfur (FP) fragment of the enzyme. Requires FMN as cofactor. The cofactor is [4Fe-4S] cluster.

The protein localises to the mitochondrion inner membrane. It carries out the reaction a ubiquinone + NADH + 5 H(+)(in) = a ubiquinol + NAD(+) + 4 H(+)(out). Its function is as follows. Core subunit of the mitochondrial membrane respiratory chain NADH dehydrogenase (Complex I) that is believed to belong to the minimal assembly required for catalysis. Complex I functions in the transfer of electrons from NADH to the respiratory chain. The immediate electron acceptor for the enzyme is believed to be ubiquinone. This is NADH dehydrogenase [ubiquinone] flavoprotein 1, mitochondrial from Arabidopsis thaliana (Mouse-ear cress).